The primary structure comprises 393 residues: Sugar efflux transporter B (393 aa).

The next 12 membrane-spanning stretches (helical) occupy residues F13–L33, A51–L71, K82–N102, F106–M126, V152–F172, V174–L194, L219–M239, L253–G273, F283–H303, V306–G326, L344–A364, and I366–C386.

It belongs to the major facilitator superfamily. Set transporter family.

The protein resides in the cell inner membrane. Its function is as follows. Involved in the efflux of sugars. The physiological role may be the detoxification of non-metabolizable sugar analogs. Can transport lactose and glucose. In Escherichia coli (strain K12), this protein is Sugar efflux transporter B (setB).